We begin with the raw amino-acid sequence, 429 residues long: Glutamate-1-semialdehyde 2,1-aminomutase 1 (429 aa).

Lysine 268 carries the post-translational modification N6-(pyridoxal phosphate)lysine.

This sequence belongs to the class-III pyridoxal-phosphate-dependent aminotransferase family. HemL subfamily. As to quaternary structure, homodimer. Pyridoxal 5'-phosphate serves as cofactor.

The protein localises to the cytoplasm. The enzyme catalyses (S)-4-amino-5-oxopentanoate = 5-aminolevulinate. The protein operates within porphyrin-containing compound metabolism; protoporphyrin-IX biosynthesis; 5-aminolevulinate from L-glutamyl-tRNA(Glu): step 2/2. The protein is Glutamate-1-semialdehyde 2,1-aminomutase 1 of Staphylococcus haemolyticus (strain JCSC1435).